The following is a 444-amino-acid chain: MIEDNKENKDHSLERGRASLIFSLKNEVGGLIKALKIFQEKHVNLLHIESRKSKRRNSEFEIFVDCDINREQLNDIFHLLKSHTNVLSVNLPDNFTLKEDGMETVPWFPKKISDLDHCANRVLMYGSELDADHPGFKDNVYRKRRKYFADLAMNYKHGDPIPKVEFTEEEIKTWGTVFQELNKLYPTHACREYLKNLPLLSKYCGYREDNIPQLEDVSNFLKERTGFSIRPVAGYLSPRDFLSGLAFRVFHCTQYVRHSSDPFYTPEPDTCHELLGHVPLLAEPSFAQFSQEIGLASLGASEEAVQKLATCYFFTVEFGLCKQDGQLRVFGAGLLSSISELKHALSGHAKVKPFDPKITCKQECLITTFQDVYFVSESFEDAKEKMREFTKTIKRPFGVKYNPYTRSIQILKDTKSITSAMNELQHDLDVVSDALAKVSRKPSI.

In terms of domain architecture, ACT spans 19–94; it reads SLIFSLKNEV…NVLSVNLPDN (76 aa). The residue at position 58 (S58) is a Phosphoserine; by PKA. Y235, R257, and T265 together coordinate L-tryptophan. Positions 272, 277, and 317 each coordinate Fe cation. L-tryptophan contacts are provided by S336 and I366.

This sequence belongs to the biopterin-dependent aromatic amino acid hydroxylase family. In terms of assembly, homotetramer. Interacts with DNAJC12. Fe(2+) serves as cofactor. In terms of processing, ubiquitinated, leading to its degradation by the proteasome. Ubiquitinated is triggered by phosphorylation. Phosphorylated; triggering degradation by the proteasome. Seems to be less widely expressed than isoform 1.

The catalysed reaction is (6R)-L-erythro-5,6,7,8-tetrahydrobiopterin + L-tryptophan + O2 = 5-hydroxy-L-tryptophan + (4aS,6R)-4a-hydroxy-L-erythro-5,6,7,8-tetrahydrobiopterin. It participates in aromatic compound metabolism; serotonin biosynthesis; serotonin from L-tryptophan: step 1/2. Its function is as follows. Oxidizes L-tryptophan to 5-hydroxy-l-tryptophan in the rate-determining step of serotonin biosynthesis. The polypeptide is Tryptophan 5-hydroxylase 1 (TPH1) (Homo sapiens (Human)).